A 250-amino-acid chain; its full sequence is Small ribosomal subunit protein uS2 (250 aa).

Belongs to the universal ribosomal protein uS2 family.

This Paraburkholderia xenovorans (strain LB400) protein is Small ribosomal subunit protein uS2.